A 189-amino-acid chain; its full sequence is Holliday junction branch migration complex subunit RuvA (189 aa).

Residues 1-62 (MIVALKGNIE…EEAWSLYGFA (62 aa)) are domain I. Positions 63–138 (EEAEKRVFDT…FSLSLQEGSK (76 aa)) are domain II. The segment at 138–139 (KA) is flexible linker. The segment at 140 to 189 (STPPVFEESRLALESLGFKSELIAKALQNIQATTTQEIIKEALKKLQTLR) is domain III.

The protein belongs to the RuvA family. As to quaternary structure, homotetramer. Forms an RuvA(8)-RuvB(12)-Holliday junction (HJ) complex. HJ DNA is sandwiched between 2 RuvA tetramers; dsDNA enters through RuvA and exits via RuvB. An RuvB hexamer assembles on each DNA strand where it exits the tetramer. Each RuvB hexamer is contacted by two RuvA subunits (via domain III) on 2 adjacent RuvB subunits; this complex drives branch migration. In the full resolvosome a probable DNA-RuvA(4)-RuvB(12)-RuvC(2) complex forms which resolves the HJ.

The protein resides in the cytoplasm. Its function is as follows. The RuvA-RuvB-RuvC complex processes Holliday junction (HJ) DNA during genetic recombination and DNA repair, while the RuvA-RuvB complex plays an important role in the rescue of blocked DNA replication forks via replication fork reversal (RFR). RuvA specifically binds to HJ cruciform DNA, conferring on it an open structure. The RuvB hexamer acts as an ATP-dependent pump, pulling dsDNA into and through the RuvAB complex. HJ branch migration allows RuvC to scan DNA until it finds its consensus sequence, where it cleaves and resolves the cruciform DNA. The chain is Holliday junction branch migration complex subunit RuvA from Wolinella succinogenes (strain ATCC 29543 / DSM 1740 / CCUG 13145 / JCM 31913 / LMG 7466 / NCTC 11488 / FDC 602W) (Vibrio succinogenes).